The sequence spans 497 residues: Glycerol kinase (497 aa).

Thr11 lines the ADP pocket. ATP is bound by residues Thr11, Ser12, and Ser13. Residue Thr11 participates in sn-glycerol 3-phosphate binding. Arg15 contacts ADP. Positions 81, 82, 133, and 242 each coordinate sn-glycerol 3-phosphate. Glycerol is bound by residues Arg81, Glu82, Tyr133, Asp242, and Gln243. ADP contacts are provided by Thr264 and Gly307. Positions 264, 307, 311, and 412 each coordinate ATP. Positions 412 and 416 each coordinate ADP.

It belongs to the FGGY kinase family.

The enzyme catalyses glycerol + ATP = sn-glycerol 3-phosphate + ADP + H(+). The protein operates within polyol metabolism; glycerol degradation via glycerol kinase pathway; sn-glycerol 3-phosphate from glycerol: step 1/1. Its activity is regulated as follows. Inhibited by fructose 1,6-bisphosphate (FBP). Key enzyme in the regulation of glycerol uptake and metabolism. Catalyzes the phosphorylation of glycerol to yield sn-glycerol 3-phosphate. This Polaromonas naphthalenivorans (strain CJ2) protein is Glycerol kinase.